Here is a 106-residue protein sequence, read N- to C-terminus: Transcription initiation factor IIA subunit 2 (106 aa).

This sequence belongs to the TFIIA subunit 2 family. In terms of assembly, TFIIA is a heterodimer of the large unprocessed subunit 1 and a small subunit gamma. It was originally believed to be a heterotrimer of an alpha (p30), a beta (p20) and a gamma (p14) subunit. Forms a complex with Moonshiner/CG12721 and Trf2. Ubiquitous.

It localises to the nucleus. TFIIA is a component of the transcription machinery of RNA polymerase II and plays an important role in transcriptional activation. TFIIA in a complex with TBP mediates transcriptional activity. Part of a rhi-dependent transcription machinery that enables the generation of piRNA precursors from heterochromatin while maintaining the suppression of transposon-encoded promoters and enhancers. Forms a complex with Moonshiner/CG12721 and Trf2 which recruit transcriptional machinery to heterochromatin to initiate the bidirectional transcription of piRNA clusters, by interacting with the RDC (rhi, del and cuff) complex that binds to repressive H3K9me3 marks in the chromatin. This mechanism allows transcription to occur in piRNA clusters despite the lack of proper promoter elements and in the presence of the repressive H3K9me3 mark. In Drosophila melanogaster (Fruit fly), this protein is Transcription initiation factor IIA subunit 2 (TfIIA-S).